The chain runs to 62 residues: Large ribosomal subunit protein bL28 (62 aa).

Belongs to the bacterial ribosomal protein bL28 family.

The protein is Large ribosomal subunit protein bL28 of Acholeplasma laidlawii (strain PG-8A).